The following is a 1172-amino-acid chain: Ras guanine nucleotide exchange factor W (1172 aa).

Composition is skewed to low complexity over residues 34–70 (PIYT…LNNL) and 78–87 (NSNSVNNTIS). Disordered regions lie at residues 34–100 (PIYT…RSNT), 138–162 (KFLD…RIQQ), and 186–246 (FKRS…EIKD). Residues 194-241 (QPPQSQSQQQQQLQLQQQQQQSMPNLSLGNNINSNNNNNNGSENNDIS) show a composition bias toward low complexity. 6 consecutive transmembrane segments (helical) span residues 286–306 (IWLT…DIIG), 320–340 (IMAV…LNLF), 347–367 (FPGT…VTDI), 378–400 (VLSI…ISLI), 432–452 (LTTN…QLLV), and 545–565 (ILHL…NLLI). Residues 666–702 (LLGMLNEIDDSLQAAKEKVEEESIQNSILKKDIEDLY) are a coiled coil. Residues 765-903 (DLNVIQYATI…YIDSIHKRKM (139 aa)) form the N-terminal Ras-GEF domain. The Ras-GEF domain maps to 938–1170 (DISDIAIQIT…WKMSLSCEQR (233 aa)).

Its subcellular location is the membrane. Its function is as follows. Promotes the exchange of Ras-bound GDP by GTP. The polypeptide is Ras guanine nucleotide exchange factor W (gefW) (Dictyostelium discoideum (Social amoeba)).